Consider the following 199-residue polypeptide: Pyridoxal 5'-phosphate synthase subunit PdxT (199 aa).

51-53 provides a ligand contact to L-glutamine; that stretch reads GES. Cysteine 83 (nucleophile) is an active-site residue. L-glutamine is bound by residues arginine 110 and 137-138; that span reads IR. Active-site charge relay system residues include histidine 172 and glutamate 174.

It belongs to the glutaminase PdxT/SNO family. In the presence of PdxS, forms a dodecamer of heterodimers. Only shows activity in the heterodimer.

It catalyses the reaction aldehydo-D-ribose 5-phosphate + D-glyceraldehyde 3-phosphate + L-glutamine = pyridoxal 5'-phosphate + L-glutamate + phosphate + 3 H2O + H(+). The catalysed reaction is L-glutamine + H2O = L-glutamate + NH4(+). The protein operates within cofactor biosynthesis; pyridoxal 5'-phosphate biosynthesis. Catalyzes the hydrolysis of glutamine to glutamate and ammonia as part of the biosynthesis of pyridoxal 5'-phosphate. The resulting ammonia molecule is channeled to the active site of PdxS. This Thermoplasma volcanium (strain ATCC 51530 / DSM 4299 / JCM 9571 / NBRC 15438 / GSS1) protein is Pyridoxal 5'-phosphate synthase subunit PdxT.